The sequence spans 101 residues: Urease subunit beta (101 aa).

The protein belongs to the urease beta subunit family. As to quaternary structure, heterotrimer of UreA (gamma), UreB (beta) and UreC (alpha) subunits. Three heterotrimers associate to form the active enzyme.

Its subcellular location is the cytoplasm. The enzyme catalyses urea + 2 H2O + H(+) = hydrogencarbonate + 2 NH4(+). The protein operates within nitrogen metabolism; urea degradation; CO(2) and NH(3) from urea (urease route): step 1/1. In Cereibacter sphaeroides (strain ATCC 17029 / ATH 2.4.9) (Rhodobacter sphaeroides), this protein is Urease subunit beta.